Consider the following 343-residue polypeptide: tRNA N6-adenosine threonylcarbamoyltransferase (343 aa).

Fe cation-binding residues include His120 and His124. Residues 142–146, Asp175, Gly188, Asp192, and Asn281 each bind substrate; that span reads VVSGG. Asp310 provides a ligand contact to Fe cation.

The protein belongs to the KAE1 / TsaD family. It depends on Fe(2+) as a cofactor.

The protein localises to the cytoplasm. The catalysed reaction is L-threonylcarbamoyladenylate + adenosine(37) in tRNA = N(6)-L-threonylcarbamoyladenosine(37) in tRNA + AMP + H(+). In terms of biological role, required for the formation of a threonylcarbamoyl group on adenosine at position 37 (t(6)A37) in tRNAs that read codons beginning with adenine. Is involved in the transfer of the threonylcarbamoyl moiety of threonylcarbamoyl-AMP (TC-AMP) to the N6 group of A37, together with TsaE and TsaB. TsaD likely plays a direct catalytic role in this reaction. The protein is tRNA N6-adenosine threonylcarbamoyltransferase of Bacillus thuringiensis subsp. konkukian (strain 97-27).